Here is a 282-residue protein sequence, read N- to C-terminus: tRNA (guanine-N(7)-)-methyltransferase (282 aa).

The interval 1 to 29 (MPHAPAKRQKREEYKNALHEDESNAALPK) is disordered. Residues 10–22 (KREEYKNALHEDE) show a composition bias toward basic and acidic residues. Residues Gly-104, 153-154 (NT), and Cys-173 contribute to the S-adenosyl-L-methionine site. Asp-176 is a catalytic residue. Position 255 to 257 (255 to 257 (TEE)) interacts with S-adenosyl-L-methionine.

This sequence belongs to the class I-like SAM-binding methyltransferase superfamily. TrmB family. As to quaternary structure, forms a complex with TRM82.

Its subcellular location is the nucleus. It carries out the reaction guanosine(46) in tRNA + S-adenosyl-L-methionine = N(7)-methylguanosine(46) in tRNA + S-adenosyl-L-homocysteine. It functions in the pathway tRNA modification; N(7)-methylguanine-tRNA biosynthesis. Functionally, catalyzes the formation of N(7)-methylguanine at position 46 (m7G46) in tRNA. This is tRNA (guanine-N(7)-)-methyltransferase from Phaeosphaeria nodorum (strain SN15 / ATCC MYA-4574 / FGSC 10173) (Glume blotch fungus).